We begin with the raw amino-acid sequence, 130 residues long: MSRTESREHAIQILFQIENEAHEISVEDATRFIVEPPNRDVFADELVHGVISKQNELDDKITPHLKSWALERLNKIDRIILRLSAFELLYTDAPEKVIVNEAVNLAKKFSDDESYKFINGVLSEIIKNKA.

It belongs to the NusB family.

Its function is as follows. Involved in transcription antitermination. Required for transcription of ribosomal RNA (rRNA) genes. Binds specifically to the boxA antiterminator sequence of the ribosomal RNA (rrn) operons. This Macrococcus caseolyticus (strain JCSC5402) (Macrococcoides caseolyticum) protein is Transcription antitermination protein NusB.